Reading from the N-terminus, the 226-residue chain is Cytidylate kinase (226 aa).

12-20 (GPSGAGKGT) is an ATP binding site.

The protein belongs to the cytidylate kinase family. Type 1 subfamily.

The protein localises to the cytoplasm. It catalyses the reaction CMP + ATP = CDP + ADP. The enzyme catalyses dCMP + ATP = dCDP + ADP. This Xanthomonas campestris pv. campestris (strain B100) protein is Cytidylate kinase.